The sequence spans 547 residues: NXPE family member 1 (547 aa).

The signal sequence occupies residues Met-1–Thr-21. 2 N-linked (GlcNAc...) asparagine glycosylation sites follow: Asn-39 and Asn-211.

Belongs to the NXPE family.

Its subcellular location is the secreted. In Homo sapiens (Human), this protein is NXPE family member 1 (NXPE1).